The sequence spans 458 residues: Elongation factor 1-alpha (458 aa).

Glycine 2 bears the N,N,N-trimethylglycine mark. At lysine 3 the chain carries N6,N6-dimethyllysine; alternate. Residue lysine 3 is modified to N6-methyllysine; alternate. The tr-type G domain maps to 5–240 (KTHVNVVVIG…DAIEPPVRPS (236 aa)). The tract at residues 14 to 21 (GHVDSGKS) is G1. 14–21 (GHVDSGKS) provides a ligand contact to GTP. The residue at position 30 (lysine 30) is an N6-methyllysine. Residues 70 to 74 (GITID) are G2. Lysine 79 is subject to N6,N6,N6-trimethyllysine. The interval 91–94 (DAPG) is G3. Residues 91–95 (DAPGH) and 153–156 (NKMD) each bind GTP. Residues 153–156 (NKMD) are G4. Residues 192–194 (SGW) are G5. Lysine 316 bears the N6,N6-dimethyllysine; alternate mark. Position 316 is an N6-methyllysine; alternate (lysine 316). Lysine 390 carries the N6-methyllysine modification.

The protein belongs to the TRAFAC class translation factor GTPase superfamily. Classic translation factor GTPase family. EF-Tu/EF-1A subfamily.

It localises to the cytoplasm. In terms of biological role, this protein promotes the GTP-dependent binding of aminoacyl-tRNA to the A-site of ribosomes during protein biosynthesis. The protein is Elongation factor 1-alpha (TEF-1) of Mucor circinelloides f. lusitanicus (Mucor racemosus var. lusitanicus).